A 225-amino-acid polypeptide reads, in one-letter code: Isoprenyl transferase 1 (225 aa).

The active site involves Asp3. Mg(2+) is bound at residue Asp3. Substrate is bound by residues Gly4–Arg7, Trp8, His21, and Ser49–Glu51. Asn52 (proton acceptor) is an active-site residue. Substrate-binding positions include Arg55, Arg174, and Arg180–Ser182. Residue Glu193 coordinates Mg(2+).

This sequence belongs to the UPP synthase family. As to quaternary structure, homodimer. Mg(2+) is required as a cofactor.

Its function is as follows. Catalyzes the condensation of isopentenyl diphosphate (IPP) with allylic pyrophosphates generating different type of terpenoids. The sequence is that of Isoprenyl transferase 1 from Corynebacterium glutamicum (strain ATCC 13032 / DSM 20300 / JCM 1318 / BCRC 11384 / CCUG 27702 / LMG 3730 / NBRC 12168 / NCIMB 10025 / NRRL B-2784 / 534).